We begin with the raw amino-acid sequence, 218 residues long: MNPRIRAAAAVAPQLQADMDPSAESIAGVDEVGRGCWFGPVFAGAVVLTEVAAVELLAEGLTDSKALTVRRRARLVPLIEDAATAWALGQASAREIDALGIRSATELAMLRALQRLPTPLELVLVDGVLPLRLWMGPQRTVVRGDSKCAAIAAASVLAKQARDGLIKRLASRFYGYGLERHVGYGTAIHRRALLDLGPTELHRRSFLTKLFAVNGSLT.

One can recognise an RNase H type-2 domain in the interval 24 to 218 (ESIAGVDEVG…KLFAVNGSLT (195 aa)). The a divalent metal cation site is built by Asp30, Glu31, and Asp126.

Belongs to the RNase HII family. Requires Mn(2+) as cofactor. It depends on Mg(2+) as a cofactor.

It is found in the cytoplasm. The catalysed reaction is Endonucleolytic cleavage to 5'-phosphomonoester.. In terms of biological role, endonuclease that specifically degrades the RNA of RNA-DNA hybrids. In Prochlorococcus marinus (strain MIT 9313), this protein is Ribonuclease HII.